Here is a 154-residue protein sequence, read N- to C-terminus: Myoglobin (154 aa).

Residues 2-148 (GLSDGEWQLV…FRHDMAAKYK (147 aa)) enclose the Globin domain. Serine 4 is subject to Phosphoserine. Residue histidine 65 participates in nitrite binding. An O2-binding site is contributed by histidine 65. Threonine 68 bears the Phosphothreonine mark. A heme b-binding site is contributed by histidine 94.

This sequence belongs to the globin family. Monomeric.

The protein localises to the cytoplasm. It is found in the sarcoplasm. The catalysed reaction is Fe(III)-heme b-[protein] + nitric oxide + H2O = Fe(II)-heme b-[protein] + nitrite + 2 H(+). It catalyses the reaction H2O2 + AH2 = A + 2 H2O. In terms of biological role, monomeric heme protein which primary function is to store oxygen and facilitate its diffusion within muscle tissues. Reversibly binds oxygen through a pentacoordinated heme iron and enables its timely and efficient release as needed during periods of heightened demand. Depending on the oxidative conditions of tissues and cells, and in addition to its ability to bind oxygen, it also has a nitrite reductase activity whereby it regulates the production of bioactive nitric oxide. Under stress conditions, like hypoxia and anoxia, it also protects cells against reactive oxygen species thanks to its pseudoperoxidase activity. The polypeptide is Myoglobin (MB) (Osphranter rufus (Red kangaroo)).